A 139-amino-acid chain; its full sequence is Peptide methionine sulfoxide reductase MsrB (139 aa).

Positions 8–130 (DREWQRELSP…NSASLQLKTQ (123 aa)) constitute a MsrB domain. Zn(2+)-binding residues include Cys-47, Cys-50, Cys-96, and Cys-99. Cys-119 (nucleophile) is an active-site residue.

Belongs to the MsrB Met sulfoxide reductase family. Zn(2+) is required as a cofactor.

It catalyses the reaction L-methionyl-[protein] + [thioredoxin]-disulfide + H2O = L-methionyl-(R)-S-oxide-[protein] + [thioredoxin]-dithiol. This chain is Peptide methionine sulfoxide reductase MsrB, found in Acinetobacter baumannii (strain AB307-0294).